The chain runs to 273 residues: Dermonecrotic toxin LhSicTox-alphaIA2aviii (273 aa).

Residue histidine 5 is part of the active site. The Mg(2+) site is built by glutamate 25 and aspartate 27. Histidine 41 acts as the Nucleophile in catalysis. 2 cysteine pairs are disulfide-bonded: cysteine 45–cysteine 51 and cysteine 47–cysteine 190. Aspartate 85 provides a ligand contact to Mg(2+).

This sequence belongs to the arthropod phospholipase D family. Class II subfamily. Requires Mg(2+) as cofactor. In terms of tissue distribution, expressed by the venom gland.

The protein resides in the secreted. It catalyses the reaction an N-(acyl)-sphingosylphosphocholine = an N-(acyl)-sphingosyl-1,3-cyclic phosphate + choline. The catalysed reaction is an N-(acyl)-sphingosylphosphoethanolamine = an N-(acyl)-sphingosyl-1,3-cyclic phosphate + ethanolamine. The enzyme catalyses a 1-acyl-sn-glycero-3-phosphocholine = a 1-acyl-sn-glycero-2,3-cyclic phosphate + choline. It carries out the reaction a 1-acyl-sn-glycero-3-phosphoethanolamine = a 1-acyl-sn-glycero-2,3-cyclic phosphate + ethanolamine. In terms of biological role, dermonecrotic toxins cleave the phosphodiester linkage between the phosphate and headgroup of certain phospholipids (sphingolipid and lysolipid substrates), forming an alcohol (often choline) and a cyclic phosphate. This toxin acts on sphingomyelin (SM). It may also act on ceramide phosphoethanolamine (CPE), lysophosphatidylcholine (LPC) and lysophosphatidylethanolamine (LPE), but not on lysophosphatidylserine (LPS), and lysophosphatidylglycerol (LPG). It acts by transphosphatidylation, releasing exclusively cyclic phosphate products as second products. Induces dermonecrosis, hemolysis, increased vascular permeability, edema, inflammatory response, and platelet aggregation. In Loxosceles hirsuta (Recluse spider), this protein is Dermonecrotic toxin LhSicTox-alphaIA2aviii.